The sequence spans 224 residues: Synaptogyrin-2 (224 aa).

M1 is subject to N-acetylmethionine. S3 carries the post-translational modification Phosphoserine. The region spanning 20–171 is the MARVEL domain; it reads YVSQPQVVTR…LASLAYQRYK (152 aa). The next 4 membrane-spanning stretches (helical) occupy residues 30 to 50, 73 to 93, 105 to 125, and 147 to 167; these read LVSM…GYIN, AIGV…AFFS, VIGD…GFCF, and AAIT…SLAY.

Belongs to the synaptogyrin family. In terms of processing, may be tyrosine phosphorylated by Src. As to expression, ubiquitously expressed with lower expression in brain (at protein level).

It localises to the cytoplasmic vesicle membrane. It is found in the cytoplasmic vesicle. The protein resides in the secretory vesicle. The protein localises to the synaptic vesicle membrane. In terms of biological role, may play a role in regulated exocytosis. In neuronal cells, modulates the localization of synaptophysin/SYP into synaptic-like microvesicles and may therefore play a role in the formation and/or the maturation of this vesicles. May also play a role in GLUT4 storage and transport to the plasma membrane. The sequence is that of Synaptogyrin-2 from Rattus norvegicus (Rat).